The primary structure comprises 111 residues: Magnetosome protein MamF (111 aa).

Topologically, residues 1 to 17 (MAETILIETKTAGGNCR) are cytoplasmic. The chain crosses the membrane as a helical span at residues 18–38 (SYLMAGASYLGILCFVPLLMS). The Lumenal segment spans residues 39–50 (RDDEYVYFHAKQ). Residues 51–71 (GLVLWMWSILAMFALHLPGIG) form a helical membrane-spanning segment. K72 is a topological domain (cytoplasmic). Residues 73–93 (WLFGFSSMGVLMLSVVGLVSV) traverse the membrane as a helical segment. Topologically, residues 94 to 111 (ALRRTWRLPLISHVVALI) are lumenal.

It belongs to the magnetosome MamF/MmsF protein family. As to quaternary structure, may form homooligomers. In terms of processing, subject to cleavage or degradation; identified by N-terminal sequencing of proteins that are about 103, 92 and 15 kDa in size.

It is found in the magnetosome membrane. Its function is as follows. Plays a role in regulating magnetite crystal size; partially redundant function with MmsF. The chain is Magnetosome protein MamF from Magnetospirillum gryphiswaldense (strain DSM 6361 / JCM 21280 / NBRC 15271 / MSR-1).